We begin with the raw amino-acid sequence, 183 residues long: Glutathione-regulated potassium-efflux system ancillary protein KefG (183 aa).

This sequence belongs to the NAD(P)H dehydrogenase (quinone) family. KefG subfamily. As to quaternary structure, interacts with KefB.

It localises to the cell inner membrane. It catalyses the reaction a quinone + NADH + H(+) = a quinol + NAD(+). It carries out the reaction a quinone + NADPH + H(+) = a quinol + NADP(+). In terms of biological role, regulatory subunit of a potassium efflux system that confers protection against electrophiles. Required for full activity of KefB. This Pectobacterium carotovorum subsp. carotovorum (strain PC1) protein is Glutathione-regulated potassium-efflux system ancillary protein KefG.